The following is a 359-amino-acid chain: C-X-C chemokine receptor type 2 (359 aa).

The Extracellular portion of the chain corresponds to 1–47; that stretch reads MGEFKVDKFNIEDFFSGDLDIFNYSSGMPSILPDAVPCHSENLEINS. A glycan (N-linked (GlcNAc...) asparagine) is linked at Asn-23. A helical transmembrane segment spans residues 48–74; the sequence is YAVVVIYVLVTLLSLVGNSLVMLVILY. The Cytoplasmic portion of the chain corresponds to 75 to 83; that stretch reads NRSTCSVTD. Residues 84–104 form a helical membrane-spanning segment; that stretch reads VYLLNLAIADLFFALTLPVWA. At 105–119 the chain is on the extracellular side; sequence ASKVNGWTFGSTLCK. Cys-118 and Cys-195 are joined by a disulfide. Residues 120-141 traverse the membrane as a helical segment; that stretch reads IFSYVKEVTFYSSVLLLACISM. Residues 142–162 lie on the Cytoplasmic side of the membrane; the sequence is DRYLAIVHATSTLIQKRHLVK. Residues 163–182 form a helical membrane-spanning segment; the sequence is FVCIAMWLLSVILALPILIL. The Extracellular segment spans residues 183 to 207; sequence RNPVKVNLSTLVCYEDVGNNTSRLR. Residues 208–230 traverse the membrane as a helical segment; sequence VVLRILPQTFGFLVPLLIMLFCY. The Cytoplasmic portion of the chain corresponds to 231 to 250; that stretch reads GFTLRTLFKAHMGQKHRAMR. A helical transmembrane segment spans residues 251 to 272; the sequence is VIFAVVLVFLLCWLPYNLVLFT. Over 273-293 the chain is Extracellular; sequence DTLMRTKLIKETCERRDDIDK. Residues 294 to 314 form a helical membrane-spanning segment; sequence ALNATEILGFLHSCLNPIIYA. Topologically, residues 315 to 359 are cytoplasmic; it reads FIGQKFRHGLLKIMATYGLVSKEFLAKEGRPSFVSSSSANTSTTL.

This sequence belongs to the G-protein coupled receptor 1 family. As to quaternary structure, interacts with IL8. Interacts with GNAI2. Phosphorylated upon ligand binding; which is required for desensitization.

The protein localises to the cell membrane. Receptor for interleukin-8 which is a powerful neutrophil chemotactic factor. Binding of IL-8 to the receptor causes activation of neutrophils. This response is mediated via a G-protein that activates a phosphatidylinositol-calcium second messenger system. Binds to IL-8 with high affinity. Also binds with high affinity to CXCL3, GRO/MGSA and NAP-2. The sequence is that of C-X-C chemokine receptor type 2 (Cxcr2) from Mus musculus (Mouse).